The sequence spans 52 residues: uncharacterized protein (52 aa).

Residues 1–52 form a disordered region; sequence MSLRPCLTPSSMQYSDIYIPTPTPTHHTHTPTPHPHPHTHTHTHHNPNPTLF. Residues 35–45 show a composition bias toward basic residues; sequence PHPHTHTHTHH.

This is an uncharacterized protein from Saccharomyces cerevisiae (strain ATCC 204508 / S288c) (Baker's yeast).